The chain runs to 468 residues: Mitochondrial dynamics protein MID51 (468 aa).

Residues 1 to 29 (MAGVNGDRKGKKDDNGLGTAIDFVLSNAK) lie on the Mitochondrial intermembrane side of the membrane. The chain crosses the membrane as a helical span at residues 30-47 (LVLGVGGAAMLGIATLAV). Topologically, residues 48–468 (KRMYDRALSA…SDPESLLRTV (421 aa)) are cytoplasmic. Residues 50–196 (MYDRALSAPS…LSGSLYDDLQ (147 aa)) are dimerization. The interval 56-123 (SAPSSPTKAD…RGLARGGRPA (68 aa)) is disordered. Over residues 91–108 (QNVSRSLQTLPTSSSSFK) the composition is skewed to polar residues. The tract at residues 161-170 (AALDICAELR) is important for interaction with DNM1L. ADP is bound by residues Ser-188, Ser-190, and His-202. The segment at 235-244 (RRENLEYFPR) is important for interaction with DNM1L. Residues Ser-344, Arg-346, and Lys-372 each contribute to the ADP site.

This sequence belongs to the MID49/MID51 family. In terms of assembly, homodimer.

It localises to the mitochondrion outer membrane. Mitochondrial outer membrane protein which regulates mitochondrial fission/fusion dynamics. Promotes the recruitment and association of the fission mediator dynamin-related protein 1 (DNM1L) to the mitochondrial surface independently of the mitochondrial fission FIS1 and MFF proteins. Regulates DNM1L GTPase activity and DNM1L oligomerization. The polypeptide is Mitochondrial dynamics protein MID51 (mief1) (Danio rerio (Zebrafish)).